Consider the following 491-residue polypeptide: Glutamyl-tRNA(Gln) amidotransferase subunit A (491 aa).

Residues Lys-77 and Ser-152 each act as charge relay system in the active site. Residue Ser-176 is the Acyl-ester intermediate of the active site.

Belongs to the amidase family. GatA subfamily. Heterotrimer of A, B and C subunits.

The enzyme catalyses L-glutamyl-tRNA(Gln) + L-glutamine + ATP + H2O = L-glutaminyl-tRNA(Gln) + L-glutamate + ADP + phosphate + H(+). Functionally, allows the formation of correctly charged Gln-tRNA(Gln) through the transamidation of misacylated Glu-tRNA(Gln) in organisms which lack glutaminyl-tRNA synthetase. The reaction takes place in the presence of glutamine and ATP through an activated gamma-phospho-Glu-tRNA(Gln). This chain is Glutamyl-tRNA(Gln) amidotransferase subunit A, found in Chlamydia trachomatis serovar L2 (strain ATCC VR-902B / DSM 19102 / 434/Bu).